Reading from the N-terminus, the 85-residue chain is Small ribosomal subunit protein uS17 (85 aa).

The protein belongs to the universal ribosomal protein uS17 family. In terms of assembly, part of the 30S ribosomal subunit.

In terms of biological role, one of the primary rRNA binding proteins, it binds specifically to the 5'-end of 16S ribosomal RNA. In Rhodospirillum centenum (strain ATCC 51521 / SW), this protein is Small ribosomal subunit protein uS17.